The following is a 359-amino-acid chain: UPF0283 membrane protein RHECIAT_CH0002430 (359 aa).

The tract at residues 1–50 is disordered; it reads MSKPPSDPPRRPPAAFAYEDEASEPRNSGRQQQGRRKPESFSENIVVTPD. The next 2 membrane-spanning stretches (helical) occupy residues 77-97 and 111-131; these read FGKIAAGAFGILLSLGLGLWT and LGYAALGVLAIGILAVLALVI.

It belongs to the UPF0283 family.

Its subcellular location is the cell inner membrane. The sequence is that of UPF0283 membrane protein RHECIAT_CH0002430 from Rhizobium etli (strain CIAT 652).